Reading from the N-terminus, the 338-residue chain is Tagatose 1,6-diphosphate aldolase (338 aa).

The protein belongs to the aldolase LacD family.

The catalysed reaction is D-tagatofuranose 1,6-bisphosphate = D-glyceraldehyde 3-phosphate + dihydroxyacetone phosphate. The protein operates within carbohydrate metabolism; D-tagatose 6-phosphate degradation; D-glyceraldehyde 3-phosphate and glycerone phosphate from D-tagatose 6-phosphate: step 2/2. In Listeria innocua serovar 6a (strain ATCC BAA-680 / CLIP 11262), this protein is Tagatose 1,6-diphosphate aldolase.